The following is a 202-amino-acid chain: High mobility group protein B3 (202 aa).

DNA-binding regions (HMG box) lie at residues 9-79 and 93-161; these read PKGK…KDYG and PKRP…ADYK. Residues Cys-23 and Cys-45 each carry the cysteine sulfonic acid (-SO3H); alternate modification. A disulfide bridge links Cys-23 with Cys-45. Residues 71–98 form a disordered region; it reads YDREMKDYGPAKGGKKKKDPNAPKRPPS. Cys-104 carries the cysteine sulfonic acid (-SO3H) modification. The interval 161–202 is disordered; that stretch reads KSKGKFDGAKGAATKAARKKVEEEDEEEEEDEEEEDEDDDDE. Over residues 183–202 the composition is skewed to acidic residues; it reads EEDEEEEEDEEEEDEDDDDE.

Belongs to the HMGB family. Post-translationally, reduction/oxidation of cysteine residues Cys-23, Cys-45 and Cys-104 and a possible intramolecular disulfide bond involving Cys-23 and Cys-45 give rise to different redox forms with specific functional activities in various cellular compartments: 1- fully reduced HMGB3 (HMGB3C23hC45hC104h), 2- disulfide HMGB3 (HMGB3C23-C45C104h) and 3- sulfonyl HMGB3 (HMGB3C23soC45soC104so).

The protein resides in the nucleus. The protein localises to the chromosome. It is found in the cytoplasm. Functionally, multifunctional protein with various roles in different cellular compartments. May act in a redox sensitive manner. Associates with chromatin and binds DNA with a preference for non-canonical DNA structures such as single-stranded DNA. Can bend DNA and enhance DNA flexibility by looping thus providing a mechanism to promote activities on various gene promoters. Binds to the delta-1 crystallin/ASL1 enhancer. Proposed to be involved in the innate immune response to nucleic acids by acting as a cytoplasmic promiscuous immunogenic DNA/RNA sensor. The sequence is that of High mobility group protein B3 (HMGB3) from Gallus gallus (Chicken).